Reading from the N-terminus, the 827-residue chain is MQRTSFENQLTFDADFEAILNAIPQPIIVKDEHFRFLFLNDAACMLVGRARCDLIGHTDYDILPTAEADRYRDMDIGVLSTGEEVSVEEPIAVPGGEVRRLVTRKSRAILTRGSSSEKVIVAIALDVTECRTAEAALQASVEHHRSLTELHPQVPWTADPSGEVLEIGPRWEKTGYAPKEALGAGWAKAMHPDDLGEVQREWAKSLATGEPLDVEFRLAAAEGGYSWYRSRAATRRAEDGSILRWYGTVEDIDDRRKMFEALKESEARFRAIADDAPVMIWVTGENGADDYHSRLWLETTGQTAEQAAGKGWLNAVHPDDRNAVERVFYQAFDLREPVRMEYRLKRAGGGSAWVIDIGQPRFASDGTFLGFVGIALDITERRNAEQERLLAQKQIHHMARHDALTGLPNRQFLREEFERLSDHIAPSTRLAILCLDLDGFKAINDAYGRATGDLLLRHVTERLRNFLKQSDILCRLSGDEFVVLRVGINSNAEARLLAQQLIDVIEAPYELAGTHVDLQVVVGLAAASKSDQSLDELIKTADIALERAKTGGGGTIVQYEPKMDADLRARQRMKVSLRHALAKGELEVRYQPLANLRTGQITTFEALARWPHPERGQVSPAEFIAVAEETGLIGPLGEWILRQACTEAVKWPPYVSVAVNLSPLQFRNQRLASTVRNSLEDTGLDASRLQLEITESVLLEECDSNLQTLKEIRQLGVIVAIDDFGTGYSSLSYLRTFPFDKIKVDRSFIADLPKSKESLAIVRAVAAIGRSLGIITTVEGVERQDQLDTIKAEGFDEAQGYLFGGPLPASQAMALLKSRSEISAAER.

One can recognise a PAS 1 domain in the interval 12–82 (FDADFEAILN…DMDIGVLSTG (71 aa)). Residues 212 to 264 (LDVEFRLAAAEGGYSWYRSRAATRRAEDGSILRWYGTVEDIDDRRKMFEALKE) enclose the PAC 1 domain. A PAS 2 domain is found at 265–335 (SEARFRAIAD…RVFYQAFDLR (71 aa)). The 53-residue stretch at 338–390 (VRMEYRLKRAGGGSAWVIDIGQPRFASDGTFLGFVGIALDITERRNAEQERLL) folds into the PAC 2 domain. One can recognise a GGDEF domain in the interval 428–561 (TRLAILCLDL…GGGTIVQYEP (134 aa)). The EAL domain occupies 570–820 (RQRMKVSLRH…QAMALLKSRS (251 aa)).

This is an uncharacterized protein from Sinorhizobium fredii (strain NBRC 101917 / NGR234).